The sequence spans 445 residues: UPF0210 protein SSA_2018 (445 aa).

It belongs to the UPF0210 family. Homodimer.

The chain is UPF0210 protein SSA_2018 from Streptococcus sanguinis (strain SK36).